Consider the following 174-residue polypeptide: Ribosome maturation factor RimM (174 aa).

The PRC barrel domain occupies 97 to 171 (SDGEYYWCDL…RMTVSLPEGL (75 aa)).

The protein belongs to the RimM family. In terms of assembly, binds ribosomal protein uS19.

It localises to the cytoplasm. An accessory protein needed during the final step in the assembly of 30S ribosomal subunit, possibly for assembly of the head region. Essential for efficient processing of 16S rRNA. May be needed both before and after RbfA during the maturation of 16S rRNA. It has affinity for free ribosomal 30S subunits but not for 70S ribosomes. The sequence is that of Ribosome maturation factor RimM from Geotalea daltonii (strain DSM 22248 / JCM 15807 / FRC-32) (Geobacter daltonii).